Here is a 1740-residue protein sequence, read N- to C-terminus: SH3 and multiple ankyrin repeat domains protein 3 (1740 aa).

The intramolecular interaction with the ANK repeats stretch occupies residues M1–Q75. Y122 is modified (phosphotyrosine). ANK repeat units lie at residues S148–R181, D182–S214, R215–T245, N249–A278, S282–V311, and N315–P345. Residues K354–L466 are disordered. Phosphoserine occurs at positions 373, 375, 387, and 394. The segment covering L404–E415 has biased composition (basic and acidic residues). Pro residues predominate over residues A444–R460. The SH3 domain occupies V470 to M529. S482 carries the post-translational modification Phosphoserine. Phosphotyrosine is present on Y555. Residues V570–T664 enclose the PDZ domain. A disordered region spans residues T664–T687. The required for interaction with ABI1 stretch occupies residues P677 to P684. S694, S781, S790, and S801 each carry phosphoserine. 5 disordered regions span residues R759–F855, A868–R1053, A1115–S1199, L1211–R1463, and G1476–G1518. The segment covering I812–G845 has biased composition (pro residues). Residues S891 and S898 each carry the phosphoserine modification. Residue T913 is modified to Phosphothreonine. Y931 carries the post-translational modification Phosphotyrosine. The residue at position 966 (R966) is an Asymmetric dimethylarginine. A compositionally biased stretch (basic and acidic residues) spans V1017–R1027. Positions S1123–P1132 are enriched in polar residues. Position 1131 is a phosphothreonine (T1131). Residues S1135, S1160, S1164, and S1167 each carry the phosphoserine modification. Basic and acidic residues predominate over residues A1175–S1195. At T1235 the chain carries Phosphothreonine. 2 stretches are compositionally biased toward pro residues: residues M1252–S1262 and T1322–V1334. Position 1254 is a phosphoserine (S1254). Residues P1335–S1344 are compositionally biased toward low complexity. Positions A1361 to L1371 are enriched in basic and acidic residues. Over residues E1372–L1393 the composition is skewed to low complexity. The SH3-binding motif lies at P1411–P1417. At S1421 the chain carries Phosphoserine. Residues I1495 to E1515 adopt a coiled-coil conformation. Residues S1496–N1506 show a composition bias toward polar residues. 4 positions are modified to phosphoserine: S1511, S1522, S1530, and S1549. Disordered stretches follow at residues I1556–L1594 and V1637–P1673. The segment covering V1637–P1647 has biased composition (low complexity). Residues S1644, S1646, and S1648 each carry the phosphoserine modification. Residues S1648 to G1658 are compositionally biased toward pro residues. Residues S1659–P1668 show a composition bias toward low complexity. Positions W1677–S1740 constitute an SAM domain.

This sequence belongs to the SHANK family. In terms of assembly, may homomultimerize via its SAM domain. Interacts with BAIAP2, DBNL and SLC17A7/VGLUT1. Interacts with DLGAP1/GKAP, GRM1/MGLUR1, GRM5/MGLUR5 and LZTS3 C-termini via its PDZ domain. Interacts with ABI1, HOMER1, HOMER2, HOMER3 and CTTN/cortactin SH3 domain. Is part of a complex with DLG4/PSD-95 and DLGAP1/GKAP. Interacts (via PDZ domain) with the GRIA1 subunit of the AMPA receptor (via PDZ-binding motif). Interacts with WASF1 and CYFIP2; the interactions mediate the association of SHANK3 with the WAVE1 complex. Interacts with ARPC2; the interaction probably mediates the association of SHANK3 with the Arp2/3 complex. Interacts (via ANK repeats) with SHARPIN and SPTAN1. Interacts (via PDZ domain) with ARHGAP44 (probably via PDZ-binding motif); the interaction takes place in dendritic spines and promotes GRIA1 exocytosis. Interacts with CAMK2A. Interacts with DIP2A. Interacts with ADGRL3. In terms of tissue distribution, widely expressed in brain (at protein level).

The protein localises to the cytoplasm. Its subcellular location is the postsynaptic density. It localises to the cell projection. It is found in the dendritic spine. Major scaffold postsynaptic density protein which interacts with multiple proteins and complexes to orchestrate the dendritic spine and synapse formation, maturation and maintenance. Interconnects receptors of the postsynaptic membrane including NMDA-type and metabotropic glutamate receptors via complexes with GKAP/PSD-95 and HOMER, respectively, and the actin-based cytoskeleton. Plays a role in the structural and functional organization of the dendritic spine and synaptic junction through the interaction with Arp2/3 and WAVE1 complex as well as the promotion of the F-actin clusters. By way of this control of actin dynamics, participates in the regulation of developing neurons growth cone motility and the NMDA receptor-signaling. Also modulates GRIA1 exocytosis and GRM5/MGLUR5 expression and signaling to control the AMPA and metabotropic glutamate receptor-mediated synaptic transmission and plasticity. May be required at an early stage of synapse formation and be inhibited by IGF1 to promote synapse maturation. In Rattus norvegicus (Rat), this protein is SH3 and multiple ankyrin repeat domains protein 3 (Shank3).